The primary structure comprises 238 residues: Probable 2-phosphosulfolactate phosphatase (238 aa).

Belongs to the ComB family. Requires Mg(2+) as cofactor.

The catalysed reaction is (2R)-O-phospho-3-sulfolactate + H2O = (2R)-3-sulfolactate + phosphate. This chain is Probable 2-phosphosulfolactate phosphatase, found in Carboxydothermus hydrogenoformans (strain ATCC BAA-161 / DSM 6008 / Z-2901).